We begin with the raw amino-acid sequence, 282 residues long: NADH-ubiquinone oxidoreductase chain 2 (282 aa).

7 consecutive transmembrane segments (helical) span residues 17–37, 58–78, 87–107, 115–135, 166–186, 202–222, and 232–252; these read ILTNNVIVWWSIFLLMTVVFI, SLGLLFLLCSGGLLQFFIILL, FWIFNVTNNIFNYGLMWFLTF, ILLQIFWLSSVYILLFGLLIC, FSMFNTFYLFIYYFVLMVLLI, TTLVFLNIPFSVSFFVKIFSL, and FTLFLLFTMFLSVLAFSFWLI.

It belongs to the complex I subunit 2 family.

It localises to the mitochondrion inner membrane. It catalyses the reaction a ubiquinone + NADH + 5 H(+)(in) = a ubiquinol + NAD(+) + 4 H(+)(out). Functionally, core subunit of the mitochondrial membrane respiratory chain NADH dehydrogenase (Complex I) that is believed to belong to the minimal assembly required for catalysis. Complex I functions in the transfer of electrons from NADH to the respiratory chain. The immediate electron acceptor for the enzyme is believed to be ubiquinone. The polypeptide is NADH-ubiquinone oxidoreductase chain 2 (Caenorhabditis elegans).